The sequence spans 397 residues: Elongation factor Tu (397 aa).

Positions 10-207 (KPHVNVGTIG…ACDSYIPDPQ (198 aa)) constitute a tr-type G domain. The interval 19–26 (GHIDHGKT) is G1. 19–26 (GHIDHGKT) provides a ligand contact to GTP. Thr26 contacts Mg(2+). Residues 60–64 (GITIA) are G2. Residues 81–84 (DCPG) form a G3 region. GTP contacts are provided by residues 81 to 85 (DCPGH) and 136 to 139 (NKCD). A G4 region spans residues 136 to 139 (NKCD). The segment at 174–176 (SAL) is G5.

It belongs to the TRAFAC class translation factor GTPase superfamily. Classic translation factor GTPase family. EF-Tu/EF-1A subfamily. Monomer.

It localises to the cytoplasm. It catalyses the reaction GTP + H2O = GDP + phosphate + H(+). In terms of biological role, GTP hydrolase that promotes the GTP-dependent binding of aminoacyl-tRNA to the A-site of ribosomes during protein biosynthesis. The protein is Elongation factor Tu of Lawsonia intracellularis (strain PHE/MN1-00).